Here is a 198-residue protein sequence, read N- to C-terminus: Suppressor of cytokine signaling 2 (198 aa).

The disordered stretch occupies residues M1–P31. An interaction with AREL1 region spans residues M1–S75. A phosphoserine mark is found at S30 and S52. The SH2 domain occupies W48–L156. One can recognise an SOCS box domain in the interval Y151–Q197. K173 participates in a covalent cross-link: Glycyl lysine isopeptide (Lys-Gly) (interchain with G-Cter in ubiquitin).

Substrate-recognition component of the ECS(SOCS2) complex, composed of SOCS2, CUL5, ELOB, ELOC and RNF7/RBX2. Interacts with IGF1R. Interacts with DCUN1D1. Post-translationally, ubiquitinated; mediated by AREL1 and leading to its subsequent proteasomal degradation. Ubiquitination is dependent on its phosphorylation at Ser-52, by PKC. Ubiquitination is stimulated by LPS. Phosphorylation at Ser-52 by PKC facilitates its ubiquitination and proteasomal degradation.

The protein localises to the cytoplasm. Its pathway is protein modification; protein ubiquitination. Its function is as follows. Substrate-recognition component of a cullin-5-RING E3 ubiquitin-protein ligase complex (ECS complex, also named CRL5 complex), which mediates the ubiquitination and subsequent proteasomal degradation of target proteins, such as EPOR and GHR. Specifically recognizes and binds phosphorylated proteins via its SH2 domain, promoting their ubiquitination. The ECS(SOCS2) complex acts as a key regulator of growth hormone receptor (GHR) levels by mediating ubiquitination and degradation of GHR, following GHR phosphorylation by JAK2. The ECS(SOCS2) also catalyzes ubiquitination and degradation of JAK2-phosphorylated EPOR. The polypeptide is Suppressor of cytokine signaling 2 (Socs2) (Rattus norvegicus (Rat)).